A 227-amino-acid chain; its full sequence is Uracil-DNA glycosylase 2 (227 aa).

Aspartate 67 (proton acceptor) is an active-site residue.

This sequence belongs to the uracil-DNA glycosylase (UDG) superfamily. UNG family.

It is found in the cytoplasm. The catalysed reaction is Hydrolyzes single-stranded DNA or mismatched double-stranded DNA and polynucleotides, releasing free uracil.. Its function is as follows. Excises uracil residues from the DNA which can arise as a result of misincorporation of dUMP residues by DNA polymerase or due to deamination of cytosine. In Streptomyces coelicolor (strain ATCC BAA-471 / A3(2) / M145), this protein is Uracil-DNA glycosylase 2 (ung2).